We begin with the raw amino-acid sequence, 233 residues long: Cysteine-rich venom protein (233 aa).

The signal sequence occupies residues 1-12 (PILAAVLQQSSG). Residues 31 to 159 (VDLHNSLRRS…PYSYFFVCQY (129 aa)) form the SCP domain. 8 cysteine pairs are disulfide-bonded: cysteine 68–cysteine 146, cysteine 85–cysteine 160, cysteine 141–cysteine 157, cysteine 179–cysteine 186, cysteine 182–cysteine 191, cysteine 195–cysteine 228, cysteine 204–cysteine 222, and cysteine 213–cysteine 226. The region spanning 195-228 (CTRENKFTNCNTMVQQSSCQDNYMKTNCPASCFC) is the ShKT domain.

It belongs to the CRISP family. As to expression, expressed by the venom gland.

It is found in the secreted. Its function is as follows. Blocks contraction of smooth muscle elicited by high potassium-induced depolarization, but does not block caffeine-stimulated contraction. May target voltage-gated calcium channels on smooth muscle. In Trimeresurus stejnegeri (Chinese green tree viper), this protein is Cysteine-rich venom protein.